Here is a 410-residue protein sequence, read N- to C-terminus: Multifunctional CCA protein (410 aa).

The ATP site is built by glycine 8 and arginine 11. CTP contacts are provided by glycine 8 and arginine 11. The Mg(2+) site is built by aspartate 21 and aspartate 23. 3 residues coordinate ATP: arginine 91, arginine 138, and arginine 141. CTP contacts are provided by arginine 91, arginine 138, and arginine 141. Positions 229 to 347 (TGIHQEMVSD…AQLALVCEAD (119 aa)) constitute an HD domain.

It belongs to the tRNA nucleotidyltransferase/poly(A) polymerase family. Bacterial CCA-adding enzyme type 1 subfamily. As to quaternary structure, monomer. Can also form homodimers and oligomers. The cofactor is Mg(2+). Ni(2+) serves as cofactor.

It catalyses the reaction a tRNA precursor + 2 CTP + ATP = a tRNA with a 3' CCA end + 3 diphosphate. The catalysed reaction is a tRNA with a 3' CCA end + 2 CTP + ATP = a tRNA with a 3' CCACCA end + 3 diphosphate. Functionally, catalyzes the addition and repair of the essential 3'-terminal CCA sequence in tRNAs without using a nucleic acid template. Adds these three nucleotides in the order of C, C, and A to the tRNA nucleotide-73, using CTP and ATP as substrates and producing inorganic pyrophosphate. tRNA 3'-terminal CCA addition is required both for tRNA processing and repair. Also involved in tRNA surveillance by mediating tandem CCA addition to generate a CCACCA at the 3' terminus of unstable tRNAs. While stable tRNAs receive only 3'-terminal CCA, unstable tRNAs are marked with CCACCA and rapidly degraded. The sequence is that of Multifunctional CCA protein from Xanthomonas euvesicatoria pv. vesicatoria (strain 85-10) (Xanthomonas campestris pv. vesicatoria).